A 72-amino-acid chain; its full sequence is Hydrophobic protein OSR8 (72 aa).

2 consecutive transmembrane segments (helical) span residues 9 to 29 and 39 to 59; these read FLEI…RFGC and LLTI…LVAL.

This sequence belongs to the UPF0057 (PMP3) family.

Its subcellular location is the membrane. This Oryza sativa subsp. japonica (Rice) protein is Hydrophobic protein OSR8 (OSR8).